Consider the following 112-residue polypeptide: Signal recognition particle 19 kDa protein (112 aa).

The protein belongs to the SRP19 family. As to quaternary structure, part of the signal recognition particle protein translocation system, which is composed of SRP and FtsY. Archaeal SRP consists of a 7S RNA molecule of 300 nucleotides and two protein subunits: SRP54 and SRP19.

It localises to the cytoplasm. Involved in targeting and insertion of nascent membrane proteins into the cytoplasmic membrane. Binds directly to 7S RNA and mediates binding of the 54 kDa subunit of the SRP. In Aeropyrum pernix (strain ATCC 700893 / DSM 11879 / JCM 9820 / NBRC 100138 / K1), this protein is Signal recognition particle 19 kDa protein.